The primary structure comprises 728 residues: Catalase-peroxidase (728 aa).

A cross-link (tryptophyl-tyrosyl-methioninium (Trp-Tyr) (with M-244)) is located at residues 91–218; the sequence is WHSAGTYRIA…LAAVQMGLIY (128 aa). Histidine 92 acts as the Proton acceptor in catalysis. The segment at residues 218–244 is a cross-link (tryptophyl-tyrosyl-methioninium (Tyr-Met) (with W-91)); sequence YVNPEGPDGNPDPVAAARDIRETFARM. Residue histidine 259 coordinates heme b.

The protein belongs to the peroxidase family. Peroxidase/catalase subfamily. Homodimer or homotetramer. It depends on heme b as a cofactor. Formation of the three residue Trp-Tyr-Met cross-link is important for the catalase, but not the peroxidase activity of the enzyme.

The catalysed reaction is H2O2 + AH2 = A + 2 H2O. It carries out the reaction 2 H2O2 = O2 + 2 H2O. Functionally, bifunctional enzyme with both catalase and broad-spectrum peroxidase activity. This is Catalase-peroxidase from Burkholderia multivorans (strain ATCC 17616 / 249).